The chain runs to 194 residues: Peptidyl-tRNA hydrolase (194 aa).

Residue Tyr-17 participates in tRNA binding. The Proton acceptor role is filled by His-22. 3 residues coordinate tRNA: Tyr-68, Asn-70, and Asn-116.

This sequence belongs to the PTH family. As to quaternary structure, monomer.

It localises to the cytoplasm. It carries out the reaction an N-acyl-L-alpha-aminoacyl-tRNA + H2O = an N-acyl-L-amino acid + a tRNA + H(+). Hydrolyzes ribosome-free peptidyl-tRNAs (with 1 or more amino acids incorporated), which drop off the ribosome during protein synthesis, or as a result of ribosome stalling. Its function is as follows. Catalyzes the release of premature peptidyl moieties from peptidyl-tRNA molecules trapped in stalled 50S ribosomal subunits, and thus maintains levels of free tRNAs and 50S ribosomes. The protein is Peptidyl-tRNA hydrolase of Pseudoalteromonas translucida (strain TAC 125).